The primary structure comprises 68 residues: Pantinin-3 (68 aa).

Positions 1–23 are cleaved as a signal peptide; it reads MKTQFAILLIALVLFQLLSQSDA. Leucine amide is present on Leu36. Residues 40–68 constitute a propeptide that is removed on maturation; the sequence is GLNELDNLDELFDGEISQADIDFLKELMS.

It belongs to the non-disulfide-bridged peptide (NDBP) superfamily. Short antimicrobial peptide (group 4) family. As to expression, expressed by the venom gland.

The protein resides in the secreted. Its subcellular location is the target cell membrane. Functionally, amphipathic peptide that possesses relatively strong activities against Gram-positive bacteria and a fungus, but has very weak antimicrobial activities against Gram-negative bacteria. Also exhibits mild hemolytic activities against human erythrocytes (16 uM induce 70% of hemolysis). Furthermore, this peptide potently inhibits the growth of vancomycin-resistant Enterococcus (VRE) S13, a pathogen that can cause a number of human infections. Minimal inhibitory concentration (MIC) are the following: 16 uM against S.aureus, 6 uM against B.magaterium, 8 uM against M.luteus, 4 uM against VRE, 12 uM against methicillin-resistant S.aureus, 36 uM against E.coli, &gt;87 uM against P.putida, 87 uM against K.oxytoca, &gt;87 uM against E.cloacae, 84 uM against S.enterica and 17 uM against the fungus C.tropicalis. This Pandinus imperator (Emperor scorpion) protein is Pantinin-3.